The following is a 223-amino-acid chain: Ribose-5-phosphate isomerase A (223 aa).

Residues 32–35 (TGST), 85–88 (DGAD), and 98–101 (KGGG) each bind substrate. E107 serves as the catalytic Proton acceptor. K125 is a binding site for substrate.

The protein belongs to the ribose 5-phosphate isomerase family. Homodimer.

The catalysed reaction is aldehydo-D-ribose 5-phosphate = D-ribulose 5-phosphate. The protein operates within carbohydrate degradation; pentose phosphate pathway; D-ribose 5-phosphate from D-ribulose 5-phosphate (non-oxidative stage): step 1/1. Its function is as follows. Catalyzes the reversible conversion of ribose-5-phosphate to ribulose 5-phosphate. This Marinomonas sp. (strain MWYL1) protein is Ribose-5-phosphate isomerase A.